The primary structure comprises 364 residues: Anthranilate N-methyltransferase (364 aa).

The segment at 1 to 20 (MGSLSESHTQYKHGVEVEED) is disordered. S-adenosyl-L-methionine-binding residues include Gly-209, Asp-232, Met-253, and Lys-266. The active-site Proton acceptor is the His-270.

The protein belongs to the class I-like SAM-binding methyltransferase superfamily. Cation-independent O-methyltransferase family. COMT subfamily. As to quaternary structure, homodimer. In terms of tissue distribution, expressed in leaves, flowers, stems and roots. Detected in the vascular tissues in stems, in the rhizodermis or the endodermis of roots, in the inside of carpels, in the central vascular bundles of the syncarp ovary and in the secretory oil glands located around the outer ovary wall.

It catalyses the reaction anthranilate + S-adenosyl-L-methionine = N-methylanthranilate + S-adenosyl-L-homocysteine + H(+). Its activity is regulated as follows. Inhibited by Ca(2+), Co(2+), Fe(2+), Fe(3+), Cu(2+) or Zn(2+). No effect of Mg(2+). Involved in the biosynthesis of acridine alkaloids. N-methyltransferase with a strict substrate specificity for anthranilate. No activity with anthranilic acid methyl ester, anthraniloyl CoA, 3- or 4-amino-benzoic acid, salicylic acid, catechol, eugenol, caffeic acid, quercetin, theobromin, theophyllin, putrescine and nicotinic acid among others. This Ruta graveolens (Common rue) protein is Anthranilate N-methyltransferase.